Consider the following 765-residue polypeptide: Myotubularin-related protein 10-A (765 aa).

One can recognise a Myotubularin phosphatase domain in the interval 209 to 650 (FETYSDWDRE…THIKLWKLCY (442 aa)).

Belongs to the protein-tyrosine phosphatase family. Non-receptor class myotubularin subfamily.

This is Myotubularin-related protein 10-A (mtmr10-a) from Xenopus laevis (African clawed frog).